The primary structure comprises 316 residues: Homoserine kinase (316 aa).

Residue 97–107 participates in ATP binding; that stretch reads PPARGLGSSAS.

The protein belongs to the GHMP kinase family. Homoserine kinase subfamily.

The protein resides in the cytoplasm. It catalyses the reaction L-homoserine + ATP = O-phospho-L-homoserine + ADP + H(+). Its pathway is amino-acid biosynthesis; L-threonine biosynthesis; L-threonine from L-aspartate: step 4/5. Functionally, catalyzes the ATP-dependent phosphorylation of L-homoserine to L-homoserine phosphate. This Prochlorococcus marinus (strain MIT 9303) protein is Homoserine kinase.